Here is a 386-residue protein sequence, read N- to C-terminus: MSVIKMTDLDLAGKRVFIRADLNVPVKDGKVTSDARIRATIPTLKLALEKGAKVMVTSHLGRPTEGEFKPEDSLQPVVDYLKNAGFNVRLEQDYLNGVDVKDGEIVVLENVRVNKGEKKNDPELGKKYAALCDVFVMDAFGTAHRAQASTYGVAEFAPIACAGPLLAAELDALGKALKEPARPMVAIVGGSKVSTKLEVLNSLSKIADQIIVGGGIANTFIAAAGHNVGKSLYEADLIPVAKELAANTDIPVPVDVRVGLEFSETAAATEKVVNEVKDDESIFDIGDKSAEQLAEIIKNAKTVLWNGPVGVFEFPHFRKGTEIISHAIANSDAFSIAGGGDTLAAIDLFGIADKISYISTGGGAFLEFVEGKVLPAVEILEKRAKN.

Residues 21–23 (DLN), Arg-36, 59–62 (HLGR), Arg-112, and Arg-145 each bind substrate. Residues Lys-196, Glu-313, and 339–342 (GGDT) contribute to the ATP site.

It belongs to the phosphoglycerate kinase family. As to quaternary structure, monomer.

The protein resides in the cytoplasm. It catalyses the reaction (2R)-3-phosphoglycerate + ATP = (2R)-3-phospho-glyceroyl phosphate + ADP. Its pathway is carbohydrate degradation; glycolysis; pyruvate from D-glyceraldehyde 3-phosphate: step 2/5. This chain is Phosphoglycerate kinase (pgk), found in Haemophilus influenzae (strain ATCC 51907 / DSM 11121 / KW20 / Rd).